A 200-amino-acid chain; its full sequence is Membrane-spanning 4-domains subfamily A member 5 (200 aa).

The Cytoplasmic portion of the chain corresponds to 1 to 52; the sequence is MDSSTAHSPVFLVFPPEITASEYESTELSATTFSTQSPLQKLFARKMKILGT. Residues 53-73 form a helical membrane-spanning segment; sequence IQILFGIMTFSFGVIFLFTLL. The Extracellular segment spans residues 74 to 80; the sequence is KPYPRFP. A helical membrane pass occupies residues 81–101; the sequence is FIFLSGYPFWGSVLFINSGAF. Residues 102 to 120 lie on the Cytoplasmic side of the membrane; sequence LIAVKRKTTETLIILSRIM. A helical membrane pass occupies residues 121 to 141; the sequence is NFLSALGAIAGIILLTFGFIL. Residues 142 to 159 lie on the Extracellular side of the membrane; sequence DQNYICGYSHQNSQCKAV. Residues 160-180 traverse the membrane as a helical segment; the sequence is TVLFLGILITLMTFSIIELFI. Topologically, residues 181 to 200 are cytoplasmic; the sequence is SLPFSILGCHSEDCDCEQCC.

The protein belongs to the MS4A family. Expressed at high level in the testis. Detected also in the pancreas, heart and in the brain.

Its subcellular location is the membrane. Its function is as follows. May be involved in signal transduction as a component of a multimeric receptor complex. The protein is Membrane-spanning 4-domains subfamily A member 5 (MS4A5) of Homo sapiens (Human).